The following is a 314-amino-acid chain: Olfactory receptor 1E1 (314 aa).

Residues 1 to 25 lie on the Extracellular side of the membrane; that stretch reads MMGQNQTSISDFLLLGLPIQPEQQN. Asn5 carries N-linked (GlcNAc...) asparagine glycosylation. The helical transmembrane segment at 26 to 49 threads the bilayer; that stretch reads LCYALFLAMYLTTLLGNLLIIVLI. Topologically, residues 50 to 57 are cytoplasmic; that stretch reads RLDSHLHT. The chain crosses the membrane as a helical span at residues 58–79; sequence PMYLFLSNLSFSDLCFSSVTIP. The Extracellular portion of the chain corresponds to 80–100; that stretch reads KLLQNMQNQDPSIPYADCLTQ. The cysteines at positions 97 and 189 are disulfide-linked. Residues 101–120 traverse the membrane as a helical segment; that stretch reads MYFFLLFGDLESFLLVAMAY. Residues 121 to 139 are Cytoplasmic-facing; sequence DRYVAICFPLHYTAIMSPM. The helical transmembrane segment at 140–158 threads the bilayer; the sequence is LCLSVVALSWVLTTFHAML. Topologically, residues 159 to 195 are extracellular; sequence HTLLMARLCFCADNVIPHFFCDMSALLKLACSDTRVN. The helical transmembrane segment at 196–219 threads the bilayer; that stretch reads EWVIFIMGGLILVIPFLLILGSYA. The Cytoplasmic segment spans residues 220 to 236; sequence RIVSSILKVPSSKGICK. A helical transmembrane segment spans residues 237-259; the sequence is ALSTCGSHLSVVSLFYGTVIGLY. The Extracellular segment spans residues 260–272; it reads LCPSANSSTLKDT. A helical membrane pass occupies residues 273–292; sequence VMAMIYTVVTPMLNPFIYSL. Residues 293–314 are Cytoplasmic-facing; the sequence is RNRDMKGALSRVIHQKKTFFSL.

It belongs to the G-protein coupled receptor 1 family.

Its subcellular location is the cell membrane. In terms of biological role, odorant receptor. This is Olfactory receptor 1E1 (OR1E1) from Pan troglodytes (Chimpanzee).